Here is a 535-residue protein sequence, read N- to C-terminus: GMP synthase [glutamine-hydrolyzing] (535 aa).

The Glutamine amidotransferase type-1 domain occupies 24–217; it reads KILIVDFGSQ…VRNISGLGGD (194 aa). Cysteine 101 (nucleophile) is an active-site residue. Residues histidine 191 and glutamate 193 contribute to the active site. Residues 218 to 410 form the GMPS ATP-PPase domain; it reads WTMHAFREEE…LGLPDVFVGR (193 aa). 245–251 is an ATP binding site; the sequence is SGGVDSA.

In terms of assembly, homodimer.

It catalyses the reaction XMP + L-glutamine + ATP + H2O = GMP + L-glutamate + AMP + diphosphate + 2 H(+). It functions in the pathway purine metabolism; GMP biosynthesis; GMP from XMP (L-Gln route): step 1/1. Its function is as follows. Catalyzes the synthesis of GMP from XMP. The sequence is that of GMP synthase [glutamine-hydrolyzing] from Bradyrhizobium sp. (strain ORS 278).